Here is a 149-residue protein sequence, read N- to C-terminus: RecQ-mediated genome instability protein 2 (149 aa).

Ser8 is subject to Phosphoserine. The segment at residues 46-116 (SRAAVGRAPL…MGVVQACSPE (71 aa)) is a DNA-binding region (OB).

Belongs to the RMI2 family. In terms of assembly, component of the RMI complex, containing at least TOP3A, RMI1 and RMI2. The RMI complex interacts with BLM. In terms of processing, phosphorylated during mitosis.

It localises to the nucleus. Essential component of the RMI complex, a complex that plays an important role in the processing of homologous recombination intermediates. It is required to regulate sister chromatid segregation and to limit DNA crossover. Essential for the stability, localization, and function of BLM, TOP3A, and complexes containing BLM. In the RMI complex, it is required to target BLM to chromatin and stress-induced nuclear foci and mitotic phosphorylation of BLM. This chain is RecQ-mediated genome instability protein 2 (Rmi2), found in Mus musculus (Mouse).